The following is a 123-amino-acid chain: Small ribosomal subunit protein uS12 (123 aa).

The disordered stretch occupies residues 1-28 (MPTIQQLIRKPRQPKVKRSKSQHLEQCP). The segment covering 9–21 (RKPRQPKVKRSKS) has biased composition (basic residues). Asp89 is subject to 3-methylthioaspartic acid.

Belongs to the universal ribosomal protein uS12 family. As to quaternary structure, part of the 30S ribosomal subunit. Contacts proteins S8 and S17. May interact with IF1 in the 30S initiation complex.

Its function is as follows. With S4 and S5 plays an important role in translational accuracy. Functionally, interacts with and stabilizes bases of the 16S rRNA that are involved in tRNA selection in the A site and with the mRNA backbone. Located at the interface of the 30S and 50S subunits, it traverses the body of the 30S subunit contacting proteins on the other side and probably holding the rRNA structure together. The combined cluster of proteins S8, S12 and S17 appears to hold together the shoulder and platform of the 30S subunit. This is Small ribosomal subunit protein uS12 from Ruegeria pomeroyi (strain ATCC 700808 / DSM 15171 / DSS-3) (Silicibacter pomeroyi).